Reading from the N-terminus, the 227-residue chain is Probable FKBP-type 25 kDa peptidyl-prolyl cis-trans isomerase (227 aa).

In terms of domain architecture, PPIase FKBP-type spans 144-227; that stretch reads ATQVHVRYRG…VFEIDLLGFR (84 aa).

The protein belongs to the FKBP-type PPIase family.

It carries out the reaction [protein]-peptidylproline (omega=180) = [protein]-peptidylproline (omega=0). Functionally, PPIases accelerate the folding of proteins. This chain is Probable FKBP-type 25 kDa peptidyl-prolyl cis-trans isomerase (fkl), found in Pseudomonas aeruginosa (strain ATCC 15692 / DSM 22644 / CIP 104116 / JCM 14847 / LMG 12228 / 1C / PRS 101 / PAO1).